Here is a 260-residue protein sequence, read N- to C-terminus: Dolichol-phosphate mannosyltransferase subunit 1 (260 aa).

A2 carries the post-translational modification N-acetylalanine. S3 and S9 each carry phosphoserine. P32, Y34, E36, I63, D65, D118, A119, D120, R147, R234, and K240 together coordinate GDP-alpha-D-mannose. Mg(2+) is bound at residue D120. D120 contributes to the Mn(2+) binding site.

Belongs to the glycosyltransferase 2 family. In terms of assembly, component of the dolichol-phosphate mannose (DPM) synthase complex composed of DPM1, DPM2 and DPM3; within the complex, directly interacts with DPM3. This interaction stabilizes DPM1. It depends on Mg(2+) as a cofactor. The cofactor is Mn(2+). Ca(2+) is required as a cofactor.

It localises to the endoplasmic reticulum. The enzyme catalyses a di-trans,poly-cis-dolichyl phosphate + GDP-alpha-D-mannose = a di-trans,poly-cis-dolichyl beta-D-mannosyl phosphate + GDP. It participates in protein modification; protein glycosylation. In terms of biological role, transfers mannose from GDP-mannose to dolichol monophosphate to form dolichol phosphate mannose (Dol-P-Man) which is the mannosyl donor in pathways leading to N-glycosylation, glycosyl phosphatidylinositol membrane anchoring, and O-mannosylation of proteins; catalytic subunit of the dolichol-phosphate mannose (DPM) synthase complex. This is Dolichol-phosphate mannosyltransferase subunit 1 (DPM1) from Homo sapiens (Human).